We begin with the raw amino-acid sequence, 459 residues long: Putrescine aminotransferase (459 aa).

Residues 150-151 (GT) and Gln-274 each bind pyridoxal 5'-phosphate. Lys-300 is modified (N6-(pyridoxal phosphate)lysine). Residue Thr-332 coordinates pyridoxal 5'-phosphate.

This sequence belongs to the class-III pyridoxal-phosphate-dependent aminotransferase family. Putrescine aminotransferase subfamily. Requires pyridoxal 5'-phosphate as cofactor.

The enzyme catalyses an alkane-alpha,omega-diamine + 2-oxoglutarate = an omega-aminoaldehyde + L-glutamate. It carries out the reaction putrescine + 2-oxoglutarate = 1-pyrroline + L-glutamate + H2O. It catalyses the reaction cadaverine + 2-oxoglutarate = 5-aminopentanal + L-glutamate. Its pathway is amine and polyamine degradation; putrescine degradation; 4-aminobutanal from putrescine (transaminase route): step 1/1. Catalyzes the aminotransferase reaction from putrescine to 2-oxoglutarate, leading to glutamate and 4-aminobutanal, which spontaneously cyclizes to form 1-pyrroline. This is the first step in one of two pathways for putrescine degradation, where putrescine is converted into 4-aminobutanoate (gamma-aminobutyrate or GABA) via 4-aminobutanal. Also functions as a cadaverine transaminase in a a L-lysine degradation pathway to succinate that proceeds via cadaverine, glutarate and L-2-hydroxyglutarate. The protein is Putrescine aminotransferase of Escherichia coli O7:K1 (strain IAI39 / ExPEC).